Consider the following 127-residue polypeptide: Large ribosomal subunit protein bL12 (127 aa).

This sequence belongs to the bacterial ribosomal protein bL12 family. Homodimer. Part of the ribosomal stalk of the 50S ribosomal subunit. Forms a multimeric L10(L12)X complex, where L10 forms an elongated spine to which 2 to 4 L12 dimers bind in a sequential fashion. Binds GTP-bound translation factors.

Functionally, forms part of the ribosomal stalk which helps the ribosome interact with GTP-bound translation factors. Is thus essential for accurate translation. This is Large ribosomal subunit protein bL12 from Thiobacillus denitrificans (strain ATCC 25259 / T1).